Consider the following 266-residue polypeptide: Na(+)-translocating NADH-quinone reductase subunit C (266 aa).

A helical membrane pass occupies residues 16 to 36 (LLVVVILCLVCSVVVAGAAVG). Position 232 is an FMN phosphoryl threonine (Thr-232).

Belongs to the NqrC family. Composed of six subunits; NqrA, NqrB, NqrC, NqrD, NqrE and NqrF. FMN serves as cofactor.

Its subcellular location is the cell inner membrane. It carries out the reaction a ubiquinone + n Na(+)(in) + NADH + H(+) = a ubiquinol + n Na(+)(out) + NAD(+). Its function is as follows. NQR complex catalyzes the reduction of ubiquinone-1 to ubiquinol by two successive reactions, coupled with the transport of Na(+) ions from the cytoplasm to the periplasm. NqrA to NqrE are probably involved in the second step, the conversion of ubisemiquinone to ubiquinol. The sequence is that of Na(+)-translocating NADH-quinone reductase subunit C from Yersinia pestis.